Consider the following 249-residue polypeptide: Small ribosomal subunit protein eS6 (249 aa).

Basic and acidic residues predominate over residues 216–229 (RMKEAKEKRQEQIA). The segment at 216–249 (RMKEAKEKRQEQIAKRRRLSSLRASTSKSESSQK) is disordered. Phosphoserine occurs at positions 235, 236, 240, 244, and 247. A compositionally biased stretch (low complexity) spans 236–249 (SLRASTSKSESSQK).

The protein belongs to the eukaryotic ribosomal protein eS6 family. In terms of assembly, component of the small ribosomal subunit. Part of the small subunit (SSU) processome, composed of more than 70 proteins and the RNA chaperone small nucleolar RNA (snoRNA) U3. Ribosomal protein S6 is the major substrate of protein kinases in eukaryote ribosomes. The phosphorylation is stimulated by growth factors, tumor promoting agents, and mitogens. It is dephosphorylated at growth arrest.

The protein localises to the cytoplasm. It is found in the nucleus. The protein resides in the nucleolus. Functionally, component of the 40S small ribosomal subunit. Plays an important role in controlling cell growth and proliferation through the selective translation of particular classes of mRNA. Part of the small subunit (SSU) processome, first precursor of the small eukaryotic ribosomal subunit. During the assembly of the SSU processome in the nucleolus, many ribosome biogenesis factors, an RNA chaperone and ribosomal proteins associate with the nascent pre-rRNA and work in concert to generate RNA folding, modifications, rearrangements and cleavage as well as targeted degradation of pre-ribosomal RNA by the RNA exosome. The protein is Small ribosomal subunit protein eS6 (RPS6) of Gallus gallus (Chicken).